A 186-amino-acid chain; its full sequence is Elongation factor P (186 aa).

It belongs to the elongation factor P family.

Its subcellular location is the cytoplasm. Its pathway is protein biosynthesis; polypeptide chain elongation. Its function is as follows. Involved in peptide bond synthesis. Stimulates efficient translation and peptide-bond synthesis on native or reconstituted 70S ribosomes in vitro. Probably functions indirectly by altering the affinity of the ribosome for aminoacyl-tRNA, thus increasing their reactivity as acceptors for peptidyl transferase. This is Elongation factor P from Pelagibacter ubique (strain HTCC1062).